A 111-amino-acid chain; its full sequence is uncharacterized protein (111 aa).

This is an uncharacterized protein from Enterococcus faecalis (strain ATCC 700802 / V583).